The sequence spans 127 residues: Nuclear transport factor 2 (127 aa).

The NTF2 domain occupies 11-124; that stretch reads VGKQFVEHYY…FLLINDFFRL (114 aa).

Its subcellular location is the cytoplasm. The protein localises to the cytosol. It is found in the nucleus outer membrane. The protein resides in the nucleus. It localises to the nuclear pore complex. Its subcellular location is the nucleus inner membrane. The protein localises to the nucleoplasm. Mediates the import of GDP-bound RAN from the cytoplasm into the nucleus which is essential for the function of RAN in cargo receptor-mediated nucleocytoplasmic transport. Thereby, plays indirectly a more general role in cargo receptor-mediated nucleocytoplasmic transport. Interacts with GDP-bound RAN in the cytosol, recruits it to the nuclear pore complex via its interaction with nucleoporins and promotes its nuclear import. In Dictyostelium discoideum (Social amoeba), this protein is Nuclear transport factor 2.